Consider the following 143-residue polypeptide: uncharacterized protein (143 aa).

Residues 5–137 (DARLASDLSL…LRNAADLILE (133 aa)) enclose the HTH marR-type domain. A DNA-binding region (H-T-H motif) is located at residues 51–74 (PGALAIRERVRPPSMTRVIASLAD).

Homodimer.

This is an uncharacterized protein from Mycobacterium leprae (strain TN).